We begin with the raw amino-acid sequence, 493 residues long: Glycerol kinase (493 aa).

Thr-11 is a binding site for ADP. Positions 11, 12, and 13 each coordinate ATP. Thr-11 contributes to the sn-glycerol 3-phosphate binding site. Arg-15 is a binding site for ADP. Sn-glycerol 3-phosphate-binding residues include Arg-80, Glu-81, Tyr-132, and Asp-241. Glycerol is bound by residues Arg-80, Glu-81, Tyr-132, Asp-241, and Gln-242. Residues Thr-263 and Gly-306 each contribute to the ADP site. 4 residues coordinate ATP: Thr-263, Gly-306, Gln-310, and Gly-408. Gly-408 contacts ADP.

This sequence belongs to the FGGY kinase family.

It carries out the reaction glycerol + ATP = sn-glycerol 3-phosphate + ADP + H(+). It functions in the pathway polyol metabolism; glycerol degradation via glycerol kinase pathway; sn-glycerol 3-phosphate from glycerol: step 1/1. Inhibited by fructose 1,6-bisphosphate (FBP). Functionally, key enzyme in the regulation of glycerol uptake and metabolism. Catalyzes the phosphorylation of glycerol to yield sn-glycerol 3-phosphate. The chain is Glycerol kinase from Cereibacter sphaeroides (strain KD131 / KCTC 12085) (Rhodobacter sphaeroides).